We begin with the raw amino-acid sequence, 137 residues long: MRTLWIVALLLVGVEGSVLELGKMILQETGKNAITSYGSYGCNCGWGHRGQPKDATDRCCFVHKCCYKKLTDCNHKTDRYSYSWKNKAIICEEKNPCLKEMCECDKAVAICLRENLDTYNKKYKAYFKLKCKKPDTC.

The first 16 residues, 1 to 16 (MRTLWIVALLLVGVEG), serve as a signal peptide directing secretion. 7 disulfide bridges follow: Cys-42-Cys-131, Cys-44-Cys-60, Cys-59-Cys-111, Cys-65-Cys-137, Cys-66-Cys-104, Cys-73-Cys-97, and Cys-91-Cys-102. Residues 121-133 (KKYKAYFKLKCKK) form an important for membrane-damaging activities in eukaryotes and bacteria; heparin-binding region.

The protein belongs to the phospholipase A2 family. Group II subfamily. K49 sub-subfamily. Monomer. Expressed by the venom gland.

The protein resides in the secreted. Functionally, snake venom phospholipase A2 (PLA2) that lacks enzymatic activity. Does not show antibacterial activity. Is myotoxic and displays edema-inducing activities. A model of myotoxic mechanism has been proposed: an apo Lys49-PLA2 is activated by the entrance of a hydrophobic molecule (e.g. fatty acid) at the hydrophobic channel of the protein leading to a reorientation of a monomer. This reorientation causes a transition between 'inactive' to 'active' states, causing alignment of C-terminal and membrane-docking sites (MDoS) side-by-side and putting the membrane-disruption sites (MDiS) in the same plane, exposed to solvent and in a symmetric position for both monomers. The MDoS region stabilizes the toxin on membrane by the interaction of charged residues with phospholipid head groups. Subsequently, the MDiS region destabilizes the membrane with penetration of hydrophobic residues. This insertion causes a disorganization of the membrane, allowing an uncontrolled influx of ions (i.e. calcium and sodium), and eventually triggering irreversible intracellular alterations and cell death. In Agkistrodon piscivorus leucostoma (Western cottonmouth), this protein is Basic phospholipase A2 homolog APL-K49.